Reading from the N-terminus, the 190-residue chain is MDSSEVVKVKQASIPAPGSILSQPNTEQSPAIVLPFQFEATTFGTAETAAQVSLQTADPITKLTAPYRHAQIVECKAILTPTDLAVSNPLTVYLAWVPANSPATPTQILKLRVYGGQSFVLGGAISAAKTIEVPLNLDSVNRMLKDSVTYTDTPKLLAYSRAPTNPSKIPTASIQISGRIRLSKPMLIAN.

At Met-1 the chain carries N-acetylmethionine; by host.

Belongs to the tymoviruses capsid protein family.

The protein resides in the virion. Self-assembles to form a T=3 icosahedral capsid composed of 180 copies of the capsid protein. The capsid encapsulates the single-stranded RNA genome. In Atropa belladonna (Belladonna), this protein is Capsid protein.